The following is a 475-amino-acid chain: Putative UDP-glucose glucosyltransferase (475 aa).

It belongs to the UDP-glycosyltransferase family.

In Fragaria ananassa (Strawberry), this protein is Putative UDP-glucose glucosyltransferase.